We begin with the raw amino-acid sequence, 806 residues long: Minor extracellular protease Vpr (806 aa).

The N-terminal stretch at 1–28 (MKKGIIRFLLVSFVLFFALSTGITGVQA) is a signal peptide. Positions 29–160 (APASSKTSAD…TISEDAVSPQ (132 aa)) are excised as a propeptide. The Inhibitor I9 domain occupies 57–142 (TVIVELKEKS…AVYPNVTYKT (86 aa)). Residues 158–597 (SPQMDDSAPY…ARIMNAIKAD (440 aa)) enclose the Peptidase S8 domain. Catalysis depends on charge relay system residues D189 and H233. Positions 383–461 (ELVEAGIGEA…KLSLEDGEKL (79 aa)) constitute a PA domain. The active-site Charge relay system is S534.

Belongs to the peptidase S8 family. Probably undergoes C-terminal processing or proteolysis. Auto-processed to form active enzymes of several different molecular weights.

It localises to the secreted. Its subcellular location is the cell wall. Activity is inhibited by phenylmethylsulfonyl fluoride (PMSF), but not by EDTA. Functionally, serine protease. Involved in the production of the competence and sporulation stimulating factor CSF. Is directly involved in the processing of pro-CSF to CSF. Can also cleave pro-PhrA to PhrA, but cannot cleave pro-PhrE. Shows fibrinolytic activity in vitro. Not essential for growth or sporulation. The polypeptide is Minor extracellular protease Vpr (Bacillus subtilis (strain 168)).